Reading from the N-terminus, the 308-residue chain is Homeobox protein HMX3 (308 aa).

2 disordered regions span residues 1 to 57 (MPET…GFAL) and 107 to 184 (AEKS…KKKT). Positions 9–19 (PSAPPPPPPPK) are enriched in pro residues. Basic and acidic residues-rich tracts occupy residues 135–144 (AEQKERDPKS) and 156–177 (EEGK…PEKK). A DNA-binding region (homeobox) is located at residues 181–240 (KKKTRTVFSRSQVFQLESTFDMKRYLSSSERAGLAASLHLTETQVKIWFQNRRNKWKRQL).

It belongs to the HMX homeobox family.

The protein resides in the nucleus. In terms of biological role, transcription factor involved in specification of neuronal cell types and which is required for inner ear and hypothalamus development. Binds to the 5'-CAAGTG-3' core sequence. This is Homeobox protein HMX3 (HMX3) from Gallus gallus (Chicken).